Reading from the N-terminus, the 1771-residue chain is Fatty acid synthase alpha subunit pkiB (1771 aa).

The span at 108–130 (SQPTQPQFEPTSPSHLTKRSPSP) shows a compositional bias: polar residues. The interval 108 to 133 (SQPTQPQFEPTSPSHLTKRSPSPSKA) is disordered. Residues 143–221 (ELTLQAGHVI…ESFQPEFSGI (79 aa)) enclose the Carrier domain. Serine 181 is subject to O-(pantetheine 4'-phosphoryl)serine. The beta-ketoacyl reductase stretch occupies residues 575–771 (HKAVLVTGAG…CGAVIGWTRG (197 aa)). Residues 1011-1531 (KELLHEVAVE…QKGAINIMVS (521 aa)) form the Ketosynthase family 3 (KS3) domain. Active-site for beta-ketoacyl synthase activity residues include cysteine 1197, histidine 1416, and histidine 1457. The Mg(2+) site is built by aspartate 1650, valine 1651, and glutamate 1652. Residues 1650 to 1652 (DVE), tyrosine 1676, serine 1686, 1695 to 1705 (EAAFKSLQTTS), 1719 to 1722 (EVGG), and 1753 to 1755 (ISH) each bind acetyl-CoA. Residues serine 1754 and histidine 1755 each coordinate Mg(2+).

This sequence belongs to the thiolase-like superfamily. Fungal fatty acid synthetase subunit alpha family. [Alpha(6)beta(6)] hexamers of two multifunctional subunits (alpha and beta).

The catalysed reaction is acetyl-CoA + n malonyl-CoA + 2n NADPH + 4n H(+) = a long-chain-acyl-CoA + n CoA + n CO2 + 2n NADP(+).. The enzyme catalyses a fatty acyl-[ACP] + malonyl-[ACP] + H(+) = a 3-oxoacyl-[ACP] + holo-[ACP] + CO2. It carries out the reaction a (3R)-hydroxyacyl-[ACP] + NADP(+) = a 3-oxoacyl-[ACP] + NADPH + H(+). It participates in secondary metabolite biosynthesis. In terms of biological role, fatty acid synthase alpha subunit; part of the pki gene cluster that mediates the biosynthesis of 2,4-dihydroxy-3-methyl-6-(2-oxoundecyl)benzaldehyde. The first step in the pathway is the generation of the decanoyl starter unit by the FAS composed of subunits pkiB and pkiC, which is then transferred directly from the FAS to the SAT domain of the non-reducing polyketide synthase pkiA. PkiA condenses the decanoyyl starter unit with 4 malonyl-CoA units and performs one methylation step to yield 2,4-dihydroxy-3-methyl-6-(2-oxoundecyl)benzaldehyde. This is Fatty acid synthase alpha subunit pkiB from Emericella nidulans (strain FGSC A4 / ATCC 38163 / CBS 112.46 / NRRL 194 / M139) (Aspergillus nidulans).